We begin with the raw amino-acid sequence, 309 residues long: 5-oxoprolinase subunit C (309 aa).

It belongs to the PxpC family. In terms of assembly, forms a complex composed of PxpA, PxpB and PxpC.

The catalysed reaction is 5-oxo-L-proline + ATP + 2 H2O = L-glutamate + ADP + phosphate + H(+). Catalyzes the cleavage of 5-oxoproline to form L-glutamate coupled to the hydrolysis of ATP to ADP and inorganic phosphate. This is 5-oxoprolinase subunit C from Haemophilus influenzae (strain ATCC 51907 / DSM 11121 / KW20 / Rd).